A 146-amino-acid chain; its full sequence is MMDINEIREYLPHRYPFLLVDRVTDLDFEAQSIRAYKNVSINEPFFNGHFPAHPIMPGVLIIEAMAQAAGILGFKMLDAKPADGTLYYFVGSDKLRFRQPVLPGDQLVLEAKFLSRKSMIWKFECRALVDGKPVCSAEITCAERSL.

His49 is an active-site residue.

It belongs to the thioester dehydratase family. FabZ subfamily.

The protein resides in the cytoplasm. The enzyme catalyses a (3R)-hydroxyacyl-[ACP] = a (2E)-enoyl-[ACP] + H2O. Its function is as follows. Involved in unsaturated fatty acids biosynthesis. Catalyzes the dehydration of short chain beta-hydroxyacyl-ACPs and long chain saturated and unsaturated beta-hydroxyacyl-ACPs. The polypeptide is 3-hydroxyacyl-[acyl-carrier-protein] dehydratase FabZ (Pseudomonas putida (strain ATCC 700007 / DSM 6899 / JCM 31910 / BCRC 17059 / LMG 24140 / F1)).